The sequence spans 856 residues: Histone-lysine N-methyltransferase EZA1 (856 aa).

Positions 1 to 11 (MVTDDSNSSGR) are enriched in polar residues. Disordered regions lie at residues 1 to 34 (MVTD…GLEN), 66 to 87 (VSPF…NSNM), and 366 to 473 (NVDS…HHGS). Residues 17–28 (DDDDDGEEEEDR) show a composition bias toward acidic residues. Residues 22-49 (GEEEEDRLEGLENRLSELKRKIQGERVR) adopt a coiled-coil conformation. Positions 68–87 (PFSSAASSRATAEDNGNSNM) are enriched in polar residues. Residues 374–392 (EQEHGIRGKREVPILKDSN) are compositionally biased toward basic and acidic residues. Positions 393–419 (DLPNLSNKKQKTAASDTKMSFVNSVPS) are enriched in polar residues. Basic and acidic residues predominate over residues 438–451 (KVNRDSEADAKEVG). The region spanning 489–539 (PSTEWNPIEKDLYLKGVEIFGRNSCLIARNLLSGLKTCLDVSNYMRENEVS) is the SANT domain. The region spanning 594 to 693 (WKRIAGGKNQ…SLGEAPRRGE (100 aa)) is the CXC domain. The region spanning 707-822 (QRILLGKSDV…ASEELFYDYR (116 aa)) is the SET domain. Y821 serves as a coordination point for S-adenosyl-L-methionine. Positions 827-856 (QAPVWARKPEGSKKDDSAITHRRARKHQSH) are disordered. Residues 833–845 (RKPEGSKKDDSAI) are compositionally biased toward basic and acidic residues. The Nuclear localization signal motif lies at 838-845 (SKKDDSAI). Residues 846–856 (THRRARKHQSH) are compositionally biased toward basic residues.

It belongs to the class V-like SAM-binding methyltransferase superfamily. Histone-lysine methyltransferase family. EZ subfamily. As to quaternary structure, component of the plant homeodomain / polycomb repressive complex 2 (PHD-PRC2) large complex during prolonged cold, composed of core PRC2 components (VRN2, EZA1, FIE and MSI1), and three related PHD finger proteins (VIL1, VIL2 and VIN3) that mediates histone H3 trimethylation on 'Lys-27' H3K27me3. Interacts with TAF13. Interacts with EOL1. Interacts (via SANT domain) with HXK1 in the nucleus.

Its subcellular location is the nucleus. It catalyses the reaction L-lysyl(27)-[histone H3] + 3 S-adenosyl-L-methionine = N(6),N(6),N(6)-trimethyl-L-lysyl(27)-[histone H3] + 3 S-adenosyl-L-homocysteine + 3 H(+). In terms of biological role, polycomb group (PcG) protein. Catalytic subunit of some PcG multiprotein complex, which methylates 'Lys-27' of histone H3, leading to transcriptional repression of the affected target genes, mainly abscisic acid (ABA) responsive elements. PcG proteins act by forming multiprotein complexes, which are required to maintain the transcriptionally repressive state of homeotic genes throughout development. PcG proteins are not required to initiate repression, but to maintain it during later stages of development. Forms a nuclear complex with CLF and HXK1 to target common glucose-responsive genes and regulate glucose signaling by glucose-mediated gene repression. Affects the recruitment of HXK1 to the target chromatin. This chain is Histone-lysine N-methyltransferase EZA1, found in Arabidopsis thaliana (Mouse-ear cress).